Reading from the N-terminus, the 140-residue chain is Large ribosomal subunit protein uL16 (140 aa).

This sequence belongs to the universal ribosomal protein uL16 family. Part of the 50S ribosomal subunit.

Binds 23S rRNA and is also seen to make contacts with the A and possibly P site tRNAs. This chain is Large ribosomal subunit protein uL16, found in Trichlorobacter lovleyi (strain ATCC BAA-1151 / DSM 17278 / SZ) (Geobacter lovleyi).